The primary structure comprises 330 residues: DNA-directed RNA polymerase subunit alpha (330 aa).

An alpha N-terminal domain (alpha-NTD) region spans residues 1 to 229 (MKNIKFIKPF…DHFNVLVELS (229 aa)). An alpha C-terminal domain (alpha-CTD) region spans residues 245 to 330 (AHNSVLDLEI…HSVEEDKDKH (86 aa)).

The protein belongs to the RNA polymerase alpha chain family. Homodimer. The RNAP catalytic core consists of 2 alpha, 1 beta, 1 beta' and 1 omega subunit. When a sigma factor is associated with the core the holoenzyme is formed, which can initiate transcription.

The catalysed reaction is RNA(n) + a ribonucleoside 5'-triphosphate = RNA(n+1) + diphosphate. Functionally, DNA-dependent RNA polymerase catalyzes the transcription of DNA into RNA using the four ribonucleoside triphosphates as substrates. This is DNA-directed RNA polymerase subunit alpha from Onion yellows phytoplasma (strain OY-M).